The chain runs to 76 residues: Small ribosomal subunit protein bS18 (76 aa).

The protein belongs to the bacterial ribosomal protein bS18 family. As to quaternary structure, part of the 30S ribosomal subunit. Forms a tight heterodimer with protein bS6.

In terms of biological role, binds as a heterodimer with protein bS6 to the central domain of the 16S rRNA, where it helps stabilize the platform of the 30S subunit. The chain is Small ribosomal subunit protein bS18 from Pseudomonas aeruginosa (strain LESB58).